The primary structure comprises 461 residues: Argininosuccinate lyase (461 aa).

Belongs to the lyase 1 family. Argininosuccinate lyase subfamily.

Its subcellular location is the cytoplasm. It carries out the reaction 2-(N(omega)-L-arginino)succinate = fumarate + L-arginine. The protein operates within amino-acid biosynthesis; L-arginine biosynthesis; L-arginine from L-ornithine and carbamoyl phosphate: step 3/3. The polypeptide is Argininosuccinate lyase (Laribacter hongkongensis (strain HLHK9)).